A 526-amino-acid chain; its full sequence is Type 2 glycosyltransferase (526 aa).

A helical transmembrane segment spans residues 25 to 45; sequence PSFDFWYSSTFWLYLFLGLWF. N-linked (GlcNAc...) asparagine glycosylation is found at N298 and N317. 3 consecutive transmembrane segments (helical) span residues 340–360, 375–395, and 403–423; these read FATFTSLAFLIDPLLLASCWW, WSQFVFMFAFTKVVKLMGLFI, and FLPVSVVFGYFHGLVKLYALI. N-linked (GlcNAc...) asparagine glycosylation is found at N426 and N517.

This sequence belongs to the GT2 glycosyltransferase family.

It localises to the cell membrane. The protein localises to the secreted. Its subcellular location is the cell wall. Its function is as follows. Glycosyltransferase involved in the maintenance of the outermost surface of the fungal cell wall. Likely functions in the synthesis of a currently unknown, potentially minor but widespread, extracellular or outer cell wall polysaccharide which plays a key role in facilitating many interactions between plants and fungi by enabling hyphal growth on solid matrices. In Gibberella zeae (strain ATCC MYA-4620 / CBS 123657 / FGSC 9075 / NRRL 31084 / PH-1) (Wheat head blight fungus), this protein is Type 2 glycosyltransferase.